A 227-amino-acid chain; its full sequence is Cytochrome c oxidase subunit 2 (227 aa).

Topologically, residues 1-14 (MAYPFQLGLQDATS) are mitochondrial intermembrane. A helical membrane pass occupies residues 15–45 (PIMEELTNFHDHTLMIVFLISSLVLYIISLM). Residues 46-59 (LTTKLTHTSTMDAQ) are Mitochondrial matrix-facing. Residues 60-87 (EVETIWTILPAAILVLIALPSLRILYMM) form a helical membrane-spanning segment. Residues 88–227 (DEINNPVLTV…YFESWSASMI (140 aa)) lie on the Mitochondrial intermembrane side of the membrane. Cu cation is bound by residues H161, C196, E198, C200, H204, and M207. E198 contributes to the Mg(2+) binding site. The residue at position 218 (Y218) is a Phosphotyrosine.

Belongs to the cytochrome c oxidase subunit 2 family. In terms of assembly, component of the cytochrome c oxidase (complex IV, CIV), a multisubunit enzyme composed of 14 subunits. The complex is composed of a catalytic core of 3 subunits MT-CO1, MT-CO2 and MT-CO3, encoded in the mitochondrial DNA, and 11 supernumerary subunits COX4I, COX5A, COX5B, COX6A, COX6B, COX6C, COX7A, COX7B, COX7C, COX8 and NDUFA4, which are encoded in the nuclear genome. The complex exists as a monomer or a dimer and forms supercomplexes (SCs) in the inner mitochondrial membrane with NADH-ubiquinone oxidoreductase (complex I, CI) and ubiquinol-cytochrome c oxidoreductase (cytochrome b-c1 complex, complex III, CIII), resulting in different assemblies (supercomplex SCI(1)III(2)IV(1) and megacomplex MCI(2)III(2)IV(2)). Found in a complex with TMEM177, COA6, COX18, COX20, SCO1 and SCO2. Interacts with TMEM177 in a COX20-dependent manner. Interacts with COX20. Interacts with COX16. It depends on Cu cation as a cofactor.

It localises to the mitochondrion inner membrane. The enzyme catalyses 4 Fe(II)-[cytochrome c] + O2 + 8 H(+)(in) = 4 Fe(III)-[cytochrome c] + 2 H2O + 4 H(+)(out). In terms of biological role, component of the cytochrome c oxidase, the last enzyme in the mitochondrial electron transport chain which drives oxidative phosphorylation. The respiratory chain contains 3 multisubunit complexes succinate dehydrogenase (complex II, CII), ubiquinol-cytochrome c oxidoreductase (cytochrome b-c1 complex, complex III, CIII) and cytochrome c oxidase (complex IV, CIV), that cooperate to transfer electrons derived from NADH and succinate to molecular oxygen, creating an electrochemical gradient over the inner membrane that drives transmembrane transport and the ATP synthase. Cytochrome c oxidase is the component of the respiratory chain that catalyzes the reduction of oxygen to water. Electrons originating from reduced cytochrome c in the intermembrane space (IMS) are transferred via the dinuclear copper A center (CU(A)) of subunit 2 and heme A of subunit 1 to the active site in subunit 1, a binuclear center (BNC) formed by heme A3 and copper B (CU(B)). The BNC reduces molecular oxygen to 2 water molecules using 4 electrons from cytochrome c in the IMS and 4 protons from the mitochondrial matrix. The polypeptide is Cytochrome c oxidase subunit 2 (MT-CO2) (Conilurus penicillatus (Brush-tailed rabbit-rat)).